The sequence spans 887 residues: Leucine--tRNA ligase (887 aa).

The short motif at 48-58 (PYPSGKLHMGH) is the 'HIGH' region element. The 'KMSKS' region signature appears at 644–648 (TMSKS). Position 647 (lysine 647) interacts with ATP.

It belongs to the class-I aminoacyl-tRNA synthetase family.

It localises to the cytoplasm. It carries out the reaction tRNA(Leu) + L-leucine + ATP = L-leucyl-tRNA(Leu) + AMP + diphosphate. The chain is Leucine--tRNA ligase from Leptothrix cholodnii (strain ATCC 51168 / LMG 8142 / SP-6) (Leptothrix discophora (strain SP-6)).